Consider the following 759-residue polypeptide: Protein MEI2-like 3 (759 aa).

RRM domains are found at residues 166–239 (RTLF…FSIP) and 251–324 (GTLV…HSRP).

In terms of biological role, probable RNA-binding protein that plays a role in meiosis and vegetative growth. In Arabidopsis thaliana (Mouse-ear cress), this protein is Protein MEI2-like 3 (ML3).